The chain runs to 252 residues: Small ribosomal subunit protein uS3 (252 aa).

In terms of domain architecture, KH type-2 spans 39 to 109 (IRNYVNTRLK…EVKIDVVEVV (71 aa)). Basic and acidic residues predominate over residues 222–240 (MKKIRDRRNDQRSRGGRDS). The interval 222–252 (MKKIRDRRNDQRSRGGRDSRNKRRRRPKNTA) is disordered. Over residues 241–252 (RNKRRRRPKNTA) the composition is skewed to basic residues.

It belongs to the universal ribosomal protein uS3 family. Part of the 30S ribosomal subunit. Forms a tight complex with proteins S10 and S14.

Its function is as follows. Binds the lower part of the 30S subunit head. Binds mRNA in the 70S ribosome, positioning it for translation. This is Small ribosomal subunit protein uS3 from Chlorobium phaeobacteroides (strain BS1).